We begin with the raw amino-acid sequence, 228 residues long: ATP synthase F(0) complex subunit a (228 aa).

5 helical membrane passes run 13–33, 69–89, 98–118, 139–159, and 194–214; these read NILA…IFPM, WALI…LGLL, QLSM…LIGL, IPTL…ALGV, and ILLF…ALVF.

Belongs to the ATPase A chain family. Component of the ATP synthase complex composed at least of ATP5F1A/subunit alpha, ATP5F1B/subunit beta, ATP5MC1/subunit c (homooctomer), MT-ATP6/subunit a, MT-ATP8/subunit 8, ATP5ME/subunit e, ATP5MF/subunit f, ATP5MG/subunit g, ATP5MK/subunit k, ATP5MJ/subunit j, ATP5F1C/subunit gamma, ATP5F1D/subunit delta, ATP5F1E/subunit epsilon, ATP5PF/subunit F6, ATP5PB/subunit b, ATP5PD/subunit d, ATP5PO/subunit OSCP. ATP synthase complex consists of a soluble F(1) head domain (subunits alpha(3) and beta(3)) - the catalytic core - and a membrane F(0) domain - the membrane proton channel (subunits c, a, 8, e, f, g, k and j). These two domains are linked by a central stalk (subunits gamma, delta, and epsilon) rotating inside the F1 region and a stationary peripheral stalk (subunits F6, b, d, and OSCP). Interacts with DNAJC30; interaction is direct.

It is found in the mitochondrion inner membrane. It carries out the reaction H(+)(in) = H(+)(out). Its function is as follows. Subunit a, of the mitochondrial membrane ATP synthase complex (F(1)F(0) ATP synthase or Complex V) that produces ATP from ADP in the presence of a proton gradient across the membrane which is generated by electron transport complexes of the respiratory chain. ATP synthase complex consist of a soluble F(1) head domain - the catalytic core - and a membrane F(1) domain - the membrane proton channel. These two domains are linked by a central stalk rotating inside the F(1) region and a stationary peripheral stalk. During catalysis, ATP synthesis in the catalytic domain of F(1) is coupled via a rotary mechanism of the central stalk subunits to proton translocation. With the subunit c (ATP5MC1), forms the proton-conducting channel in the F(0) domain, that contains two crucial half-channels (inlet and outlet) that facilitate proton movement from the mitochondrial intermembrane space (IMS) into the matrix. Protons are taken up via the inlet half-channel and released through the outlet half-channel, following a Grotthuss mechanism. This Pelomedusa subrufa (African side-necked turtle) protein is ATP synthase F(0) complex subunit a.